The sequence spans 318 residues: ATP synthase gamma chain (318 aa).

Belongs to the ATPase gamma chain family. As to quaternary structure, F-type ATPases have 2 components, CF(1) - the catalytic core - and CF(0) - the membrane proton channel. CF(1) has five subunits: alpha(3), beta(3), gamma(1), delta(1), epsilon(1). CF(0) has three main subunits: a, b and c.

The protein resides in the cell membrane. Its function is as follows. Produces ATP from ADP in the presence of a proton gradient across the membrane. The gamma chain is believed to be important in regulating ATPase activity and the flow of protons through the CF(0) complex. This chain is ATP synthase gamma chain, found in Lactobacillus johnsonii (strain CNCM I-12250 / La1 / NCC 533).